The primary structure comprises 239 residues: Aspartate/glutamate leucyltransferase (239 aa).

Belongs to the R-transferase family. Bpt subfamily.

The protein localises to the cytoplasm. It carries out the reaction N-terminal L-glutamyl-[protein] + L-leucyl-tRNA(Leu) = N-terminal L-leucyl-L-glutamyl-[protein] + tRNA(Leu) + H(+). The enzyme catalyses N-terminal L-aspartyl-[protein] + L-leucyl-tRNA(Leu) = N-terminal L-leucyl-L-aspartyl-[protein] + tRNA(Leu) + H(+). Functionally, functions in the N-end rule pathway of protein degradation where it conjugates Leu from its aminoacyl-tRNA to the N-termini of proteins containing an N-terminal aspartate or glutamate. This chain is Aspartate/glutamate leucyltransferase, found in Campylobacter jejuni (strain RM1221).